A 120-amino-acid polypeptide reads, in one-letter code: Protein CcdB (120 aa).

A Response regulatory domain is found at arginine 3–methionine 118. A 4-aspartylphosphate modification is found at aspartate 53.

In Bacillus subtilis (strain 168), this protein is Protein CcdB (ccdB).